The primary structure comprises 189 residues: MTEYKLVVVGARGVGKSALTIQLIQNHFVDEYDPTIEDSYRKQVVIDGETCLLDILDTAGQEEYSAMRDQYMRTGEGFLCVFAINNTKSFEDIHQYREQIKRVKDSDDVPMVLVGNKCDLAARTVESRQAQDLARSYGIPYIETSAKTRQGVEDAFYTLVREIRQHKLRKLNPPDESGPGCMSCKCVLS.

10-17 provides a ligand contact to GTP; that stretch reads GARGVGKS. Residues 32–40 carry the Effector region motif; sequence YDPTIEDSY. GTP contacts are provided by residues 57–61 and 116–119; these read DTAGQ and NKCD. Residues C181 and C184 are each lipidated (S-palmitoyl cysteine; by host). Residue C186 is modified to Cysteine methyl ester; by host. Residue C186 is the site of S-farnesyl cysteine; by host attachment. Positions 187 to 189 are cleaved as a propeptide — removed in mature form; that stretch reads VLS.

It belongs to the small GTPase superfamily. Ras family.

It is found in the host cell membrane. The enzyme catalyses GTP + H2O = GDP + phosphate + H(+). Alternates between an inactive form bound to GDP and an active form bound to GTP. Activated by a guanine nucleotide-exchange factor (GEF) and inactivated by a GTPase-activating protein (GAP). The chain is GTPase HRas (H-RAS) from Mus musculus (Mouse).